The sequence spans 62 residues: Potassium channel toxin kappa-KTx 3.3 (62 aa).

The N-terminal stretch at 1 to 26 (MKSTLMTASLLILVLLSIVDYASVYA) is a signal peptide. Residues 27-36 (ELIDSEISME) constitute a propeptide that is removed on maturation. 2 disulfide bridges follow: Cys43-Cys61 and Cys47-Cys57.

The protein belongs to the short scorpion toxin superfamily. Potassium channel inhibitor kappa-KTx family. Kappa-KTx 3 subfamily. As to expression, expressed by the venom gland.

It is found in the secreted. In terms of biological role, potassium channel inhibitor (Kv). In Heterometrus petersii (Asian forest scorpion), this protein is Potassium channel toxin kappa-KTx 3.3.